The sequence spans 207 residues: Small ribosomal subunit protein uS4 (207 aa).

Positions 31 to 40 are enriched in basic and acidic residues; sequence KCRLDNKPGQ. The segment at 31 to 56 is disordered; sequence KCRLDNKPGQDGRTSGSRTSDYGNQL. Residues 42 to 53 show a composition bias toward polar residues; the sequence is GRTSGSRTSDYG. The region spanning 97–158 is the S4 RNA-binding domain; it reads SRLDNVVYRM…KAKKQARITE (62 aa).

The protein belongs to the universal ribosomal protein uS4 family. As to quaternary structure, part of the 30S ribosomal subunit. Contacts protein S5. The interaction surface between S4 and S5 is involved in control of translational fidelity.

Functionally, one of the primary rRNA binding proteins, it binds directly to 16S rRNA where it nucleates assembly of the body of the 30S subunit. With S5 and S12 plays an important role in translational accuracy. This Polynucleobacter necessarius subsp. necessarius (strain STIR1) protein is Small ribosomal subunit protein uS4.